The following is a 125-amino-acid chain: Alpha-endosulfine (125 aa).

The span at 1–37 shows a compositional bias: basic and acidic residues; that stretch reads MSDKYIGDSHLEETGEEKQDSQEKEAVTPEKAEEQKL. A disordered region spans residues 1–53; it reads MSDKYIGDSHLEETGEEKQDSQEKEAVTPEKAEEQKLKAKYPNLGQKPGGSDF. T28 carries the phosphothreonine; by CDK2 modification. S67 is modified (phosphoserine; by GWL). The interval 81-108 is disordered; the sequence is QLPCAGPDKNLVTGDHIPTPQDLPQRKS. At T99 the chain carries Phosphothreonine; by CDK2. S109 carries the post-translational modification Phosphoserine; by PKA.

Belongs to the endosulfine family. Phosphorylation at Ser-67 by gwl during mitosis is essential for interaction with ppp2r2d (PR55-delta) and subsequent inactivation of PP2A.

The protein resides in the cytoplasm. Protein phosphatase inhibitor that specifically inhibits protein phosphatase 2A (PP2A) during mitosis. When phosphorylated at Ser-67 during mitosis, specifically interacts with ppp2r2d (PR55-delta) and inhibits its activity, leading to inactivation of PP2A, an essential condition to keep cyclin-B1-CDK1 activity high during M phase. The polypeptide is Alpha-endosulfine (ensa) (Xenopus tropicalis (Western clawed frog)).